We begin with the raw amino-acid sequence, 221 residues long: ATP phosphoribosyltransferase (221 aa).

This sequence belongs to the ATP phosphoribosyltransferase family. Short subfamily. In terms of assembly, heteromultimer composed of HisG and HisZ subunits.

The protein localises to the cytoplasm. The catalysed reaction is 1-(5-phospho-beta-D-ribosyl)-ATP + diphosphate = 5-phospho-alpha-D-ribose 1-diphosphate + ATP. Its pathway is amino-acid biosynthesis; L-histidine biosynthesis; L-histidine from 5-phospho-alpha-D-ribose 1-diphosphate: step 1/9. Its function is as follows. Catalyzes the condensation of ATP and 5-phosphoribose 1-diphosphate to form N'-(5'-phosphoribosyl)-ATP (PR-ATP). Has a crucial role in the pathway because the rate of histidine biosynthesis seems to be controlled primarily by regulation of HisG enzymatic activity. This Anaeromyxobacter dehalogenans (strain 2CP-1 / ATCC BAA-258) protein is ATP phosphoribosyltransferase.